A 341-amino-acid polypeptide reads, in one-letter code: N-acetyl-gamma-glutamyl-phosphate reductase (341 aa).

The active site involves Cys-147.

This sequence belongs to the NAGSA dehydrogenase family. Type 1 subfamily.

Its subcellular location is the cytoplasm. The catalysed reaction is N-acetyl-L-glutamate 5-semialdehyde + phosphate + NADP(+) = N-acetyl-L-glutamyl 5-phosphate + NADPH + H(+). It participates in amino-acid biosynthesis; L-arginine biosynthesis; N(2)-acetyl-L-ornithine from L-glutamate: step 3/4. Its function is as follows. Catalyzes the NADPH-dependent reduction of N-acetyl-5-glutamyl phosphate to yield N-acetyl-L-glutamate 5-semialdehyde. The sequence is that of N-acetyl-gamma-glutamyl-phosphate reductase from Dehalococcoides mccartyi (strain ATCC BAA-2100 / JCM 16839 / KCTC 5957 / BAV1).